The chain runs to 186 residues: ADP-ribosylation factor-like protein 8B (186 aa).

Positions 1 to 19 form an intramembrane region, note=Mediates targeting to membranes; sequence MLALISRLLDWFRSLFWKE. GTP is bound by residues 29–35, 71–75, and 130–133; these read QYSGKTT, DIGGQ, and NKRD. Lysine 141 participates in a covalent cross-link: Glycyl lysine isopeptide (Lys-Gly) (interchain with G-Cter in ubiquitin).

Belongs to the small GTPase superfamily. Arf family. As to quaternary structure, interacts with tubulin. Interacts with BORCS5; recruits ARL8B to lysosomes. Interacts with VPS41; the interaction mediates the recruitment of the HOPS complex to lysosomes. Interacts (GTP-bound form) with PLEKHM2 (via RUN domain); the interaction is required to recruit the motor protein kinesin-1 on lysosomes. Interacts (GTP-bound form) with PLEKHM1 (via RUN domain); the interaction is required for PLEKHM1 localization to lysosomes and for ARL8B function in delivery and degradation of endocytic and autophagic cargo in lysosomes. PLEKHM1 and PLEKHM2 compete for interaction with ARL8B. Interacts (GTP-bound form) with RUFY1; the interaction is required for RUFY1 endosomal location. When GTP-bound, interacts with RUFY3 and RUFY4, but not with RUFY1, nor RUFY2. Ubiquitinated at Lys-141 by RNF167, leading to its degradation.

The protein localises to the late endosome membrane. The protein resides in the lysosome membrane. Its subcellular location is the cytoplasm. It is found in the cytoskeleton. It localises to the spindle. The protein localises to the cell projection. The protein resides in the axon. Its subcellular location is the synapse. It is found in the cytolytic granule membrane. It localises to the early endosome membrane. The catalysed reaction is GTP + H2O = GDP + phosphate + H(+). In terms of biological role, small GTPase which cycles between active GTP-bound and inactive GDP-bound states. In its active state, binds to a variety of effector proteins playing a key role in the regulation of lysosomal positioning which is important for nutrient sensing, natural killer cell-mediated cytotoxicity and antigen presentation. Along with its effectors, orchestrates lysosomal transport and fusion. Localizes specifically to lysosomal membranes and mediates anterograde lysosomal motility by recruiting PLEKHM2, which in turn recruits the motor protein kinesin-1 on lysosomes. Required for lysosomal and cytolytic granule exocytosis. Critical factor involved in NK cell-mediated cytotoxicity. Drives the polarization of cytolytic granules and microtubule-organizing centers (MTOCs) toward the immune synapse between effector NK lymphocytes and target cells. In neurons, mediates the anterograde axonal long-range transport of presynaptic lysosome-related vesicles required for presynaptic biogenesis and synaptic function. Also acts as a regulator of endosome to lysosome trafficking pathways of special significance for host defense. Recruits RUFY1 onto early endosomes regulating endosomes to trans-Golgi network proteins retrieval. Regulates cargo trafficking to lysosomes by binding to PLEKHM1 and recruiting the HOPS subunit VPS41, resulting in functional assembly of the HOPS complex on lysosomal membranes. Plays an important role in cargo delivery to lysosomes for antigen presentation and microbial killing. Directs the intersection of CD1d with lipid antigens in lysosomes, and plays a role in intersecting phagosomes with lysosomes to generate phagolysosomes that kill microbes. Involved in the process of MHC II presentation. Regulates the delivery of antigens to lysosomes and the formation of MHC II-peptide complexes through the recruitment of the HOPS complex to lysosomes allowing the fusion of late endosomes to lysosomes. May play a role in chromosome segregation. This is ADP-ribosylation factor-like protein 8B (ARL8B) from Bos taurus (Bovine).